The sequence spans 449 residues: Integrator complex subunit 15 (449 aa).

This sequence belongs to the Integrator subunit 15 family. In terms of assembly, component of the Integrator complex, composed of core subunits INTS1, INTS2, INTS3, INTS4, INTS5, INTS6, INTS7, INTS8, INTS9/RC74, INTS10, INTS11/CPSF3L, INTS12, INTS13, INTS14 and INTS15. The core complex associates with protein phosphatase 2A subunits PPP2CA and PPP2R1A, to form the Integrator-PP2A (INTAC) complex. INTS15 is part of the tail subcomplex, composed of INTS10, INTS13, INTS14 and INTS15.

Its subcellular location is the nucleus. It is found in the chromosome. Functionally, component of the integrator complex, a multiprotein complex that terminates RNA polymerase II (Pol II) transcription in the promoter-proximal region of genes. The integrator complex provides a quality checkpoint during transcription elongation by driving premature transcription termination of transcripts that are unfavorably configured for transcriptional elongation: the complex terminates transcription by (1) catalyzing dephosphorylation of the C-terminal domain (CTD) of Pol II subunit POLR2A/RPB1 and SUPT5H/SPT5, (2) degrading the exiting nascent RNA transcript via endonuclease activity and (3) promoting the release of Pol II from bound DNA. The integrator complex is also involved in terminating the synthesis of non-coding Pol II transcripts, such as enhancer RNAs (eRNAs), small nuclear RNAs (snRNAs), telomerase RNAs and long non-coding RNAs (lncRNAs). INTS15 is part of the integrator tail module that acts as a platform for the recruitment of transcription factors at promoters. Within the integrator complex, INTS15 is required to bridge different integrator modules. The chain is Integrator complex subunit 15 from Homo sapiens (Human).